The following is a 307-amino-acid chain: 4-hydroxythreonine-4-phosphate dehydrogenase (307 aa).

2 residues coordinate substrate: His121 and Thr122. Residues His150, His189, and His245 each coordinate a divalent metal cation. Lys253, Asn262, and Arg271 together coordinate substrate.

It belongs to the PdxA family. Homodimer. It depends on Zn(2+) as a cofactor. The cofactor is Mg(2+). Co(2+) serves as cofactor.

It is found in the cytoplasm. The catalysed reaction is 4-(phosphooxy)-L-threonine + NAD(+) = 3-amino-2-oxopropyl phosphate + CO2 + NADH. Its pathway is cofactor biosynthesis; pyridoxine 5'-phosphate biosynthesis; pyridoxine 5'-phosphate from D-erythrose 4-phosphate: step 4/5. Its function is as follows. Catalyzes the NAD(P)-dependent oxidation of 4-(phosphooxy)-L-threonine (HTP) into 2-amino-3-oxo-4-(phosphooxy)butyric acid which spontaneously decarboxylates to form 3-amino-2-oxopropyl phosphate (AHAP). This is 4-hydroxythreonine-4-phosphate dehydrogenase from Sulfurimonas denitrificans (strain ATCC 33889 / DSM 1251) (Thiomicrospira denitrificans (strain ATCC 33889 / DSM 1251)).